The primary structure comprises 376 residues: Chaperone protein DnaJ (376 aa).

The J domain occupies 5–70 (DYYEVLGVGR…DKKAAYDQFG (66 aa)). Residues 132-210 (GLTKELRIPT…CHGDGRVEKS (79 aa)) form a CR-type zinc finger. Positions 145, 148, 162, 165, 184, 187, 198, and 201 each coordinate Zn(2+). CXXCXGXG motif repeat units follow at residues 145 to 152 (CDLCDGSG), 162 to 169 (CTTCHGQG), 184 to 191 (CPTCHGRG), and 198 to 205 (CSKCHGDG).

The protein belongs to the DnaJ family. In terms of assembly, homodimer. The cofactor is Zn(2+).

It localises to the cytoplasm. In terms of biological role, participates actively in the response to hyperosmotic and heat shock by preventing the aggregation of stress-denatured proteins and by disaggregating proteins, also in an autonomous, DnaK-independent fashion. Unfolded proteins bind initially to DnaJ; upon interaction with the DnaJ-bound protein, DnaK hydrolyzes its bound ATP, resulting in the formation of a stable complex. GrpE releases ADP from DnaK; ATP binding to DnaK triggers the release of the substrate protein, thus completing the reaction cycle. Several rounds of ATP-dependent interactions between DnaJ, DnaK and GrpE are required for fully efficient folding. Also involved, together with DnaK and GrpE, in the DNA replication of plasmids through activation of initiation proteins. This is Chaperone protein DnaJ from Shewanella sp. (strain W3-18-1).